The following is a 269-amino-acid chain: UPF0162 protein YchA (269 aa).

This sequence belongs to the UPF0162 family.

In Escherichia coli O157:H7, this protein is UPF0162 protein YchA (ychA).